We begin with the raw amino-acid sequence, 217 residues long: 3-oxoadipate CoA-transferase subunit B (217 aa).

Residue E50 is part of the active site.

This sequence belongs to the 3-oxoacid CoA-transferase subunit B family. As to quaternary structure, heterodimer.

The enzyme catalyses 3-oxoadipate + succinyl-CoA = 3-oxoadipyl-CoA + succinate. It participates in aromatic compound metabolism; beta-ketoadipate pathway; acetyl-CoA and succinyl-CoA from 3-oxoadipate: step 1/2. The protein is 3-oxoadipate CoA-transferase subunit B (pcaJ) of Acinetobacter baylyi (strain ATCC 33305 / BD413 / ADP1).